We begin with the raw amino-acid sequence, 1161 residues long: Perforin-like protein 1 (1161 aa).

A helical membrane pass occupies residues 67–86 (LWITFVCLLTLHMFGLSSAV). The segment at 154-329 (PEALNEVPTK…LGDSSALDLF (176 aa)) is disordered. Basic and acidic residues-rich tracts occupy residues 162 to 177 (TKVE…DKTE) and 184 to 194 (ADHKSLLEGRS). Residues 201–211 (PDDDFDFLFED) show a composition bias toward acidic residues. Residues 222-234 (NKGTSSDETSPGD) show a composition bias toward polar residues. Over residues 238 to 249 (GEGSSASDSLLS) the composition is skewed to low complexity. N-linked (GlcNAc...) asparagine glycosylation is present at Asn257. Positions 264 to 283 (NQKRITHPKSKAQHQKKVTK) are enriched in basic residues. Residues 309–322 (NTQADDSQRQSLGD) are compositionally biased toward polar residues. Residue Asn344 is glycosylated (N-linked (GlcNAc...) asparagine). Residues 353-381 (AANDGGLFSSSGMGPTGASDETSANPLGS) form a disordered region. Polar residues predominate over residues 361 to 378 (SSSGMGPTGASDETSANP). An MACPF domain is found at 463 to 817 (LSAVYTKATK…LTPQDLSALT (355 aa)). Cys539 and Cys602 are oxidised to a cystine. Asn550 is a glycosylation site (N-linked (GlcNAc...) asparagine). A beta stranded membrane pass occupies residues 554–589 (YQNELSVDASLQGGDPIGLNSFSASTGYRDFAKEVS). N-linked (GlcNAc...) asparagine glycosylation occurs at Asn618. Cys643 and Cys657 are oxidised to a cystine. The chain crosses the membrane as a beta stranded span at residues 694–740 (RSEVEKMRNMGIDVKTQLKMQLGGVSGGAGQGTSSKKNQSSSEYQMN). Residues 716–736 (GGVSGGAGQGTSSKKNQSSSE) form a disordered region. Residue Asn755 is glycosylated (N-linked (GlcNAc...) asparagine). 6 disulfides stabilise this stretch: Cys845–Cys900, Cys874–Cys881, Cys928–Cys981, Cys957–Cys964, Cys1019–Cys1080, and Cys1047–Cys1054. Residues Asn1022, Asn1050, and Asn1111 are each glycosylated (N-linked (GlcNAc...) asparagine). A disordered region spans residues 1094 to 1149 (VGKAKGNGKKKKGKKGKNKTNAPNEVEEGQQLGADSPSQVSVPADADSGPTSKTMS). The segment covering 1099 to 1111 (GNGKKKKGKKGKN) has biased composition (basic residues).

It belongs to the MPEG1 family. In terms of assembly, homooligomer; forms a homooligomeric pore.

It localises to the parasitophorous vacuole membrane. It is found in the cytoplasmic vesicle. Its subcellular location is the secretory vesicle. The protein localises to the microneme membrane. Functionally, pore-forming protein that promotes parasite exit from host cells: mediates formation of a pore in the parasitophorous vacuolar membrane, leading to membrane permeabilization, thereby facilitating parasite egress from host cells. May also form a pore in the host plasma membrane. Preferentially binds inner leaflet lipids, such as phosphatidylethanolamine (PE) or phosphatidylserine (PS). The protein is Perforin-like protein 1 of Toxoplasma gondii (strain ATCC 50861 / VEG).